We begin with the raw amino-acid sequence, 552 residues long: Formate--tetrahydrofolate ligase (552 aa).

ATP is bound at residue 62-69 (TPAGEGKS).

It belongs to the formate--tetrahydrofolate ligase family.

The catalysed reaction is (6S)-5,6,7,8-tetrahydrofolate + formate + ATP = (6R)-10-formyltetrahydrofolate + ADP + phosphate. Its pathway is one-carbon metabolism; tetrahydrofolate interconversion. The sequence is that of Formate--tetrahydrofolate ligase from Ligilactobacillus salivarius (strain UCC118) (Lactobacillus salivarius).